The sequence spans 476 residues: Protein transport protein Sec61 subunit alpha isoform 1 (476 aa).

Topologically, residues 1–33 (MGIKFLEVIKPFCVILPEIQKPERKIQFKEKVL) are cytoplasmic. A helical membrane pass occupies residues 34-53 (WTAITLFIFLVCCQIPLFGI). Residues 54–76 (MSSDSADPFYWMRVILASNRGTL) lie on the Lumenal side of the membrane. The chain crosses the membrane as a helical span at residues 77 to 96 (MELGISPIVTSGLIMQLLAG). Residues 97-117 (AKIIEVGDTPKDRALFNGAQK) are Cytoplasmic-facing. Residues 118 to 138 (LFGMTITIGQSIVYVMTGMYG) form a helical membrane-spanning segment. Topologically, residues 139 to 144 (DPSEMG) are lumenal. Residues 145 to 165 (AGVCLLITIQLFVAGLIVLLL) form a helical membrane-spanning segment. Topologically, residues 166 to 172 (DELLQKG) are cytoplasmic. The chain crosses the membrane as a helical span at residues 173 to 193 (YGLGSGISLFIATNICETIVW). The Lumenal segment spans residues 194-240 (KAFSPTTVNTGRGMEFEGAIIALFHLLATRTDKVRALREAFYRQNLP). The helical transmembrane segment at 241 to 261 (NLMNLIATIFVFAVVIYFQGF) threads the bilayer. The Cytoplasmic segment spans residues 262 to 288 (RVDLPIKSARYRGQYNTYPIKLFYTSN). A helical membrane pass occupies residues 289–309 (IPIILQSALVSNLYVISQMLS). At 310–354 (ARFSGNLLVSLLGTWSDTSSGGPARAYPVGGLCYYLSPPESFGSV) the chain is on the lumenal side. Residues 355–375 (LEDPVHAVVYIVFMLGSCAFF) form a helical membrane-spanning segment. Topologically, residues 376–420 (SKTWIEVSGSSAKDVAKQLKEQQMVMRGHRETSMVHELNRYIPTA) are cytoplasmic. The chain crosses the membrane as a helical span at residues 421–441 (AAFGGLCIGALSVLADFLGAI). Over 442 to 445 (GSGT) the chain is Lumenal. A helical transmembrane segment spans residues 446 to 462 (GILLAVTIIYQYFEIFV). The Cytoplasmic segment spans residues 463 to 476 (KEQSEVGSMGALLF).

The protein belongs to the SecY/SEC61-alpha family. In terms of assembly, the SEC61 channel-forming translocon complex consists of channel-forming core components SEC61A1, SEC61B and SEC61G and different auxiliary components such as SEC62 and SEC63. The SEC61 channel associates with the multi-pass translocon (MPT) complex.

Its subcellular location is the endoplasmic reticulum membrane. Functionally, component of SEC61 channel-forming translocon complex that mediates transport of signal peptide-containing precursor polypeptides across the endoplasmic reticulum (ER). Forms a ribosome receptor and a gated pore in the ER membrane, both functions required for cotranslational translocation of nascent polypeptides. May cooperate with auxiliary protein SEC62, SEC63 and HSPA5/BiP to enable post-translational transport of small presecretory proteins. The SEC61 channel is also involved in ER membrane insertion of transmembrane proteins: it mediates membrane insertion of the first few transmembrane segments of proteins, while insertion of subsequent transmembrane regions of multi-pass membrane proteins is mediated by the multi-pass translocon (MPT) complex. The SEC61 channel cooperates with the translocating protein TRAM1 to import nascent proteins into the ER. Controls the passive efflux of calcium ions from the ER lumen to the cytosol through SEC61 channel, contributing to the maintenance of cellular calcium homeostasis. Plays a critical role in nephrogenesis, specifically at pronephros stage. This is Protein transport protein Sec61 subunit alpha isoform 1 (SEC61A1) from Bos taurus (Bovine).